A 171-amino-acid polypeptide reads, in one-letter code: Shikimate kinase (171 aa).

14-19 (GAGKST) is an ATP binding site. S18 is a Mg(2+) binding site. D36, R60, and G82 together coordinate substrate. R120 provides a ligand contact to ATP. R139 contacts substrate. Residue Q156 participates in ATP binding.

The protein belongs to the shikimate kinase family. In terms of assembly, monomer. Requires Mg(2+) as cofactor.

It is found in the cytoplasm. It catalyses the reaction shikimate + ATP = 3-phosphoshikimate + ADP + H(+). The protein operates within metabolic intermediate biosynthesis; chorismate biosynthesis; chorismate from D-erythrose 4-phosphate and phosphoenolpyruvate: step 5/7. Catalyzes the specific phosphorylation of the 3-hydroxyl group of shikimic acid using ATP as a cosubstrate. The protein is Shikimate kinase of Shewanella woodyi (strain ATCC 51908 / MS32).